Consider the following 433-residue polypeptide: Protein translocase subunit SecY (433 aa).

10 helical membrane passes run 17 to 37 (IVFTILILIVCRFGSFIPIPG), 71 to 91 (IFALAIMPYITASIIIQLMSV), 117 to 137 (LTVLLASFQAYGVAISLESIV), 141 to 161 (GPVVILAGFFFRVTTVITLVV), 184 to 204 (LIIFIGIISGVPSAIISMFEL), 212 to 232 (PLIALAVCIGVVVLIAIIIFF), 268 to 288 (GVIPPIFASSILLFPATLANF), 310 to 330 (YILLYVALIMFFSFFYTAIVF), 366 to 386 (LTVIGGIYLSVICVIPELLMN), and 388 to 408 (YVISLSLGGTSFLIVVNVVLD).

Belongs to the SecY/SEC61-alpha family. As to quaternary structure, component of the Sec protein translocase complex. Heterotrimer consisting of SecY, SecE and SecG subunits. The heterotrimers can form oligomers, although 1 heterotrimer is thought to be able to translocate proteins. Interacts with the ribosome. Interacts with SecDF, and other proteins may be involved. Interacts with SecA.

Its subcellular location is the cell inner membrane. The central subunit of the protein translocation channel SecYEG. Consists of two halves formed by TMs 1-5 and 6-10. These two domains form a lateral gate at the front which open onto the bilayer between TMs 2 and 7, and are clamped together by SecE at the back. The channel is closed by both a pore ring composed of hydrophobic SecY resides and a short helix (helix 2A) on the extracellular side of the membrane which forms a plug. The plug probably moves laterally to allow the channel to open. The ring and the pore may move independently. This is Protein translocase subunit SecY from Rickettsia felis (strain ATCC VR-1525 / URRWXCal2) (Rickettsia azadi).